The following is a 311-amino-acid chain: MKNYNLSDNINRSNILTEESNHLSKNIDTVSTSKLVDIFVEEDKKPQQAISQAKHQITKSIDLIYQRLIDNGRLFYIGAGTSGRIAVLDAVECPPTFCTSPELVQAVIAGGSSSLINSSEEKEDSNSLSIKDLKERNFSSKDCLIGITAGGTTPYVLSGLNYARNIGALNIAITSVPEQQASFGSNITIRLITGPEIIAGSTRLKAGTATKMALNIISSGVMIKLGKVFDNKMIDVSISNKKLFDRALRITSSLLNIEMKEAQLLLDQAKGSIKVACIIKSSGMDQKSAFALLERNNHNLRKALKDINIEF.

Residues 64–227 (IYQRLIDNGR…SSGVMIKLGK (164 aa)) enclose the SIS domain. Residue Glu92 is the Proton donor of the active site. Glu123 is an active-site residue.

The protein belongs to the GCKR-like family. MurNAc-6-P etherase subfamily. Homodimer.

The catalysed reaction is N-acetyl-D-muramate 6-phosphate + H2O = N-acetyl-D-glucosamine 6-phosphate + (R)-lactate. Its pathway is amino-sugar metabolism; N-acetylmuramate degradation. Functionally, specifically catalyzes the cleavage of the D-lactyl ether substituent of MurNAc 6-phosphate, producing GlcNAc 6-phosphate and D-lactate. This chain is N-acetylmuramic acid 6-phosphate etherase, found in Prochlorococcus marinus (strain SARG / CCMP1375 / SS120).